The following is a 517-amino-acid chain: GMP synthase [glutamine-hydrolyzing] (517 aa).

In terms of domain architecture, Glutamine amidotransferase type-1 spans 9–199 (RILILDFGSQ…VLGVCGCERL (191 aa)). Cysteine 86 (nucleophile) is an active-site residue. Residues histidine 173 and glutamate 175 contribute to the active site. One can recognise a GMPS ATP-PPase domain in the interval 200–392 (WTSESIIEDA…LGLPYNMLYR (193 aa)). 227-233 (SGGVDSS) serves as a coordination point for ATP.

As to quaternary structure, homodimer.

It carries out the reaction XMP + L-glutamine + ATP + H2O = GMP + L-glutamate + AMP + diphosphate + 2 H(+). Its pathway is purine metabolism; GMP biosynthesis; GMP from XMP (L-Gln route): step 1/1. Functionally, catalyzes the synthesis of GMP from XMP. The protein is GMP synthase [glutamine-hydrolyzing] of Vibrio campbellii (strain ATCC BAA-1116).